We begin with the raw amino-acid sequence, 291 residues long: Endo-1,4-beta-xylanase 11B (291 aa).

Positions 1-19 (MVAFSSLFLGASIAATALA) are cleaved as a signal peptide. Residues 34 to 222 (TYTQSATGTH…SSGSARINVG (189 aa)) enclose the GH11 domain. N-linked (GlcNAc...) asparagine glycosylation is present at Asn-93. Catalysis depends on Glu-118, which acts as the Nucleophile. Glu-209 serves as the catalytic Proton donor. The segment at 223 to 246 (GGSTGGGNNGGGNNGGNPGGNPGG) is disordered. In terms of domain architecture, CBM1 spans 255-291 (NCSPRWGQCGGQGWNGPTCCESGTTCRQQNQWYSQCL).

The protein belongs to the glycosyl hydrolase 11 (cellulase G) family.

The protein resides in the secreted. It catalyses the reaction Endohydrolysis of (1-&gt;4)-beta-D-xylosidic linkages in xylans.. It functions in the pathway glycan degradation; xylan degradation. Its activity is regulated as follows. The activity iss completely inhibited by Hg(2+), a metal ion that interacts with Trp and oxidizes the indole ring, and is significantly enhanced by beta-mercaptoethanol, which counteracts the oxidation effects of the S-S linkage between Cys residues. Its function is as follows. Endo-1,4-beta-xylanase involved in the hydrolysis of xylan, a major structural heterogeneous polysaccharide found in plant biomass representing the second most abundant polysaccharide in the biosphere, after cellulose. Shows maximum activity on soluble wheat arabinoxylan (defined as 100%), moderate activity on birchwood xylan (80.5%) and beechwood xylan (76.2%), and weak activity on insoluble wheat arabinoxylan (7.0%). Has no activity towards glucan or carboxymethyl cellulose-sodium (CMC-Na). In Humicola insolens (Soft-rot fungus), this protein is Endo-1,4-beta-xylanase 11B.